The chain runs to 1272 residues: uncharacterized protein (1272 aa).

Coiled-coil stretches lie at residues 185-212, 246-274, and 607-640; these read IEFL…EAVN, KNSA…YLDA, and ALGK…NTVI. Residues 1179 to 1231 are disordered; it reads ELPETSQQPVVPTPPATRPSSPIPPESDILTEEEQLEEQPPRQQQATRKTTTT. The segment covering 1189-1203 has biased composition (pro residues); that stretch reads VPTPPATRPSSPIPP. Over residues 1219 to 1231 the composition is skewed to low complexity; that stretch reads PRQQQATRKTTTT.

This is an uncharacterized protein from Magallana gigas (Pacific oyster).